The primary structure comprises 263 residues: MFRRGLVFSRHCHYSLIRPRFPLNRTCLARFADGRKNLATDNRTQTYQSWRGMISIRALLLAAATSVGLYAYFQHEKKKVLERQNDKVLATIGRPQLGGAFSLIDHHGNRVTDNDFKGKFSLIYFGFTRCPDICPDELDKMSAAIDIVNNVVGDVVYPIFITCDPARDPPQEMAEYLEDFNPKIVGLTGSYEEIKDICKKFRVYFSTPKNIDPKKDDYLVDHSVFFYLMDPEGKFIEVFGRNSTSEDLARAIGSYYLSRKKQK.

Residues Cys-130, Cys-134, and His-222 each coordinate Cu cation.

The protein belongs to the SCO1/2 family.

The protein resides in the mitochondrion inner membrane. Its function is as follows. Acts as a copper chaperone, transporting copper to the Cu(A) site on the cytochrome c oxidase subunit II (COX2). The sequence is that of Protein sco1 (sco1) from Schizosaccharomyces pombe (strain 972 / ATCC 24843) (Fission yeast).